The sequence spans 379 residues: CCN family member 1 (379 aa).

The signal sequence occupies residues 1-24 (MSSSTIKTLAVAVTLLHLTRLALS). The region spanning 25 to 94 (TCPAACHCPL…TALKGICRAQ (70 aa)) is the IGFBP N-terminal domain. 6 cysteine pairs are disulfide-bonded: C26–C50, C30–C52, C32–C53, C39–C56, C64–C78, and C70–C91. One can recognise a VWFC domain in the interval 98–164 (RPCEYNSRIY…GQCCEEWVCD (67 aa)). S184 is subject to Phosphoserine. One can recognise a TSP type-1 domain in the interval 226–271 (KCIVQTTSWSQCSKSCGTGISTRVTNDNSECRLVKETRICEVRPCG). A heparin-binding region spans residues 277 to 313 (SLKKGKKCSKTKKSPEPVRFTYAGCSSVKKYRPKYCG). Disulfide bonds link C284-C321, C301-C335, C312-C351, C315-C353, and C320-C357. Residues 284–358 (CSKTKKSPEP…QSCKCNYNCP (75 aa)) enclose the CTCK domain.

The protein belongs to the CCN family. In terms of assembly, interaction with integrins is heparin- and cell-type-dependent and promotes cell adhesion.

The protein localises to the secreted. Functionally, promotes cell proliferation, chemotaxis, angiogenesis and cell adhesion. Appears to play a role in wound healing by up-regulating, in skin fibroblasts, the expression of a number of genes involved in angiogenesis, inflammation and matrix remodeling including VEGA-A, VEGA-C, MMP1, MMP3, TIMP1, uPA, PAI-1 and integrins alpha-3 and alpha-5. CCN1-mediated gene regulation is dependent on heparin-binding. Down-regulates the expression of alpha-1 and alpha-2 subunits of collagen type-1. Promotes cell adhesion and adhesive signaling through integrin alpha-6/beta-1, cell migration through integrin alpha-1/beta-5 and cell proliferation through integrin alpha-v/beta-3. This is CCN family member 1 from Rattus norvegicus (Rat).